The primary structure comprises 317 residues: Transaldolase (317 aa).

Lys-132 functions as the Schiff-base intermediate with substrate in the catalytic mechanism.

The protein belongs to the transaldolase family. Type 1 subfamily. Homodimer.

It localises to the cytoplasm. It carries out the reaction D-sedoheptulose 7-phosphate + D-glyceraldehyde 3-phosphate = D-erythrose 4-phosphate + beta-D-fructose 6-phosphate. It functions in the pathway carbohydrate degradation; pentose phosphate pathway; D-glyceraldehyde 3-phosphate and beta-D-fructose 6-phosphate from D-ribose 5-phosphate and D-xylulose 5-phosphate (non-oxidative stage): step 2/3. In terms of biological role, transaldolase is important for the balance of metabolites in the pentose-phosphate pathway. The chain is Transaldolase from Photorhabdus laumondii subsp. laumondii (strain DSM 15139 / CIP 105565 / TT01) (Photorhabdus luminescens subsp. laumondii).